A 221-amino-acid chain; its full sequence is uncharacterized protein (221 aa).

Positions 1–189 (MDSGKDTNGY…NVVYCSEKAV (189 aa)) constitute a Peptidase S8 domain.

It belongs to the peptidase S8 family.

This is an uncharacterized protein from Aquifex aeolicus (strain VF5).